Here is a 769-residue protein sequence, read N- to C-terminus: Probable beta-glucosidase M (769 aa).

A signal peptide spans 1–22; sequence MHSNVGLAGLAGLLATASVCLS. Residues N28, N75, and N262 are each glycosylated (N-linked (GlcNAc...) asparagine). D290 is a catalytic residue. N-linked (GlcNAc...) asparagine glycosylation is found at N318, N325, N396, N437, N510, N546, and N625.

It belongs to the glycosyl hydrolase 3 family.

It is found in the secreted. The enzyme catalyses Hydrolysis of terminal, non-reducing beta-D-glucosyl residues with release of beta-D-glucose.. Its pathway is glycan metabolism; cellulose degradation. In terms of biological role, beta-glucosidases are one of a number of cellulolytic enzymes involved in the degradation of cellulosic biomass. Catalyzes the last step releasing glucose from the inhibitory cellobiose. This is Probable beta-glucosidase M (bglM) from Aspergillus fumigatus (strain CBS 144.89 / FGSC A1163 / CEA10) (Neosartorya fumigata).